The primary structure comprises 407 residues: Arginine deiminase (407 aa).

Cys397 (amidino-cysteine intermediate) is an active-site residue.

This sequence belongs to the arginine deiminase family.

It localises to the cytoplasm. It carries out the reaction L-arginine + H2O = L-citrulline + NH4(+). Its pathway is amino-acid degradation; L-arginine degradation via ADI pathway; carbamoyl phosphate from L-arginine: step 1/2. The polypeptide is Arginine deiminase (Vibrio cholerae serotype O1 (strain ATCC 39541 / Classical Ogawa 395 / O395)).